We begin with the raw amino-acid sequence, 152 residues long: Photosystem II extrinsic protein U, chloroplastic (152 aa).

A chloroplast-targeting transit peptide spans 1–35 (MDSTAFVGAAAPLRVAAAARSTICMAAADDKPVVS). The transit peptide at 36–59 (RRAALTGAAAAALAAVAGSLPALA) directs the protein to the thylakoid.

The protein belongs to the PsbU family. As to quaternary structure, PSII is composed of 1 copy each of membrane proteins PsbA, PsbB, PsbC, PsbD, PsbE, PsbF, PsbH, PsbI, PsbJ, PsbK, PsbL, PsbM, PsbT, PsbX, PsbY, PsbZ, Psb30/Ycf12, at least 3 peripheral proteins of the oxygen-evolving complex and a large number of cofactors. It forms dimeric complexes. The oxygen-evolving complex in red algae is composed of PsbO (OEC33), PsbQ', cytochrome c-550 and PsbU. Post-translationally, predicted to be translocated into the thylakoid lumen by the Tat system.

The protein resides in the plastid. Its subcellular location is the chloroplast thylakoid membrane. Functionally, one of the extrinsic, lumenal subunits of photosystem II (PSII). PSII is a light-driven water plastoquinone oxidoreductase, using light energy to abstract electrons from H(2)O, generating a proton gradient subsequently used for ATP formation. The extrinsic proteins stabilize the structure of photosystem II oxygen-evolving complex (OEC), the ion environment of oxygen evolution and protect the OEC against heat-induced inactivation. This is Photosystem II extrinsic protein U, chloroplastic from Pyropia yezoensis (Susabi-nori).